Reading from the N-terminus, the 508-residue chain is Photosystem II CP47 reaction center protein (508 aa).

The next 6 helical transmembrane spans lie at 21–36, 101–115, 140–156, 203–218, 237–252, and 457–472; these read SVHI…WAGS, IVFS…IWHW, GIHL…FGAF, IAAG…FHLS, VLSS…AFVV, and TFAL…HGAR.

This sequence belongs to the PsbB/PsbC family. PsbB subfamily. PSII is composed of 1 copy each of membrane proteins PsbA, PsbB, PsbC, PsbD, PsbE, PsbF, PsbH, PsbI, PsbJ, PsbK, PsbL, PsbM, PsbT, PsbX, PsbY, PsbZ, Psb30/Ycf12, at least 3 peripheral proteins of the oxygen-evolving complex and a large number of cofactors. It forms dimeric complexes. Binds multiple chlorophylls. PSII binds additional chlorophylls, carotenoids and specific lipids. is required as a cofactor.

The protein localises to the plastid. It is found in the chloroplast thylakoid membrane. One of the components of the core complex of photosystem II (PSII). It binds chlorophyll and helps catalyze the primary light-induced photochemical processes of PSII. PSII is a light-driven water:plastoquinone oxidoreductase, using light energy to abstract electrons from H(2)O, generating O(2) and a proton gradient subsequently used for ATP formation. This Zea mays (Maize) protein is Photosystem II CP47 reaction center protein.